The chain runs to 119 residues: Large ribosomal subunit protein bL20 (119 aa).

It belongs to the bacterial ribosomal protein bL20 family.

Functionally, binds directly to 23S ribosomal RNA and is necessary for the in vitro assembly process of the 50S ribosomal subunit. It is not involved in the protein synthesizing functions of that subunit. This Sorangium cellulosum (strain So ce56) (Polyangium cellulosum (strain So ce56)) protein is Large ribosomal subunit protein bL20.